Here is a 274-residue protein sequence, read N- to C-terminus: MELHEISKLDNKKHPERIVESKMKKRMKPYSLTSLNNLDDGCLMHILSFLSPIPDRYNTALVCHRWRYLACHPRLWLRVDRFVKDLSQPGVFLNIESAVSAARPGDTILIVAGGNYRVSNIQIKKPLCLVGGGEIPDETTLVCARGSDSALELLSTCKLANLTVKAELGCCLLHRSGRLTIDGCVLQCETNPLDHLSCPIVSTAGDEDIENILSHVEVKETVTGKIKANSVTVLQTRIEGGAKAVSTRGDLVLQRVRVMYSKAYLYFWFDVDYE.

The region spanning 32-79 (LTSLNNLDDGCLMHILSFLSPIPDRYNTALVCHRWRYLACHPRLWLRV) is the F-box domain.

As to quaternary structure, part of a SCF (SKP1-cullin-F-box) protein ligase complex. Interacts with SKP1A/ASK1.

It participates in protein modification; protein ubiquitination. The protein is F-box protein SKIP5 (SKIP5) of Arabidopsis thaliana (Mouse-ear cress).